Reading from the N-terminus, the 376-residue chain is 1-deoxy-D-xylulose 5-phosphate reductoisomerase (376 aa).

NADPH-binding residues include T12, G13, S14, I15, R39, Q40, and N110. K111 contributes to the 1-deoxy-D-xylulose 5-phosphate binding site. E112 contributes to the NADPH binding site. D136 serves as a coordination point for Mn(2+). Positions 137, 138, 162, and 185 each coordinate 1-deoxy-D-xylulose 5-phosphate. E138 is a Mn(2+) binding site. Position 191 (G191) interacts with NADPH. Residues S198, N203, K204, and E207 each coordinate 1-deoxy-D-xylulose 5-phosphate. E207 lines the Mn(2+) pocket.

It belongs to the DXR family. Mg(2+) serves as cofactor. It depends on Mn(2+) as a cofactor.

The enzyme catalyses 2-C-methyl-D-erythritol 4-phosphate + NADP(+) = 1-deoxy-D-xylulose 5-phosphate + NADPH + H(+). It participates in isoprenoid biosynthesis; isopentenyl diphosphate biosynthesis via DXP pathway; isopentenyl diphosphate from 1-deoxy-D-xylulose 5-phosphate: step 1/6. Catalyzes the NADPH-dependent rearrangement and reduction of 1-deoxy-D-xylulose-5-phosphate (DXP) to 2-C-methyl-D-erythritol 4-phosphate (MEP). The polypeptide is 1-deoxy-D-xylulose 5-phosphate reductoisomerase (Treponema pallidum (strain Nichols)).